The sequence spans 285 residues: ATP synthase gamma chain (285 aa).

It belongs to the ATPase gamma chain family. As to quaternary structure, F-type ATPases have 2 components, CF(1) - the catalytic core - and CF(0) - the membrane proton channel. CF(1) has five subunits: alpha(3), beta(3), gamma(1), delta(1), epsilon(1). CF(0) has three main subunits: a, b and c.

It localises to the cell membrane. Functionally, produces ATP from ADP in the presence of a proton gradient across the membrane. The gamma chain is believed to be important in regulating ATPase activity and the flow of protons through the CF(0) complex. The sequence is that of ATP synthase gamma chain from Dehalococcoides mccartyi (strain CBDB1).